We begin with the raw amino-acid sequence, 260 residues long: O-antigen export system permease protein RfbA (260 aa).

7 helical membrane passes run 31–51, 63–83, 109–129, 139–159, 173–193, 201–221, and 229–249; these read FLGF…YVLL, FPFF…SVGG, VVVT…VLGM, VVLF…LTYI, IVSN…PLST, SLML…AIFY, and EPLM…SSIF. One can recognise an ABC transmembrane type-2 domain in the interval 32–252; it reads LGFLWTFLNP…WAASSIFESR (221 aa).

It belongs to the ABC-2 integral membrane protein family.

It localises to the cell inner membrane. Functionally, may form an ATP-driven O-antigen export apparatus, in association with RfbB. In Myxococcus xanthus, this protein is O-antigen export system permease protein RfbA (rfbA).